A 174-amino-acid chain; its full sequence is CD164 sialomucin-like 2 protein (174 aa).

Positions 1 to 29 are cleaved as a signal peptide; sequence MEAPGPRALRTALCGGCCCLLLCAQLAVA. Residues 30 to 141 lie on the Extracellular side of the membrane; the sequence is GKGARGFGRG…AHSPGFDGAS (112 aa). 2 N-linked (GlcNAc...) asparagine glycosylation sites follow: N71 and N103. Residues 142–162 traverse the membrane as a helical segment; it reads FIGGVVLVLSLQAVAFFVLHF. Residues 163–174 are Cytoplasmic-facing; the sequence is LKAKDSTYQTLI.

Belongs to the CD164 family.

The protein localises to the membrane. This is CD164 sialomucin-like 2 protein (CD164L2) from Homo sapiens (Human).